A 91-amino-acid chain; its full sequence is Cell division protein FtsB (91 aa).

At 1–3 (MRW) the chain is on the cytoplasmic side. A helical transmembrane segment spans residues 4–21 (PVIILAVLVVVLQYPLWL). Residues 22-91 (GKGGWLRVWE…EIFVQVPQKH (70 aa)) lie on the Periplasmic side of the membrane. Residues 28 to 72 (RVWEVDRKLHEQREENTRLEERNAGLDAEVRDLKSGNEAIEERAR) are a coiled coil.

Belongs to the FtsB family. Part of a complex composed of FtsB, FtsL and FtsQ.

The protein resides in the cell inner membrane. Its function is as follows. Essential cell division protein. May link together the upstream cell division proteins, which are predominantly cytoplasmic, with the downstream cell division proteins, which are predominantly periplasmic. The protein is Cell division protein FtsB of Azoarcus sp. (strain BH72).